We begin with the raw amino-acid sequence, 543 residues long: Ipecac alkaloid beta-glucosidase 3 (543 aa).

A beta-D-glucoside is bound by residues glutamine 36, histidine 140, asparagine 185–glutamate 186, tyrosine 350, glutamate 422, tryptophan 471, and phenylalanine 487. Glutamate 186 serves as the catalytic Proton donor. Glutamate 422 serves as the catalytic Nucleophile.

Belongs to the glycosyl hydrolase 1 family.

It is found in the cytoplasm. The protein resides in the cytosol. The catalysed reaction is deacetylipecoside + H2O = deacetylipecoside aglycone + D-glucose. It catalyses the reaction deacetylisoipecoside + H2O = deacetylisoipecoside aglycone + D-glucose. It functions in the pathway alkaloid biosynthesis. In terms of biological role, beta-glucosidase catalyzing deglucosylation on N-deacetylisoipecoside and N-deacetylipecoside. The sequence is that of Ipecac alkaloid beta-glucosidase 3 from Carapichea ipecacuanha (Ipecac).